Reading from the N-terminus, the 363-residue chain is mRNA decay activator protein ZFP36L2-A (363 aa).

The RNA-binding signature appears at 131-136; it reads RYKTEL. 2 consecutive C3H1-type zinc fingers follow at residues 131–159 and 169–197; these read RYKTELCRPFEESGACKYGEKCQFAHGFH and KYKTELCRTFHTIGFCPYGPRCHFIHNAE. Positions 148–189 are RNA-binding; sequence YGEKCQFAHGFHELRSLTRHPKYKTELCRTFHTIGFCPYGPR. The segment at 308-349 is disordered; sequence ESPVFDAPPSPPDSLSDRDSYLSGSLSSGSLSGSDSPTLDSN. A compositionally biased stretch (low complexity) spans 328–347; sequence YLSGSLSSGSLSGSDSPTLD.

In terms of processing, phosphorylated. Widely expressed in adults.

It localises to the nucleus. The protein resides in the cytoplasm. In terms of biological role, zinc-finger RNA-binding protein that destabilizes several cytoplasmic AU-rich element (ARE)-containing mRNA transcripts by promoting their poly(A) tail removal or deadenylation, and hence provide a mechanism for attenuating protein synthesis. Acts as a 3'-untranslated region (UTR) ARE mRNA-binding adapter protein to communicate signaling events to the mRNA decay machinery. Functions by recruiting the CCR4-NOT deadenylase complex and probably other components of the cytoplasmic RNA decay machinery to the bound ARE-containing mRNAs, and hence promotes ARE-mediated mRNA deadenylation and decay processes. Binds to 3'-UTR ARE of numerous mRNAs. Also induces the degradation of ARE-containing mRNAs even in absence of poly(A) tail. Required for tubulogenesis during pronephros development. The protein is mRNA decay activator protein ZFP36L2-A (zfp36l2-A) of Xenopus laevis (African clawed frog).